The following is a 72-amino-acid chain: Protein kish (72 aa).

The first 26 residues, 1 to 26 (MVAIFNFQSLLVVILLFICTCTYIRG), serve as a signal peptide directing secretion. Topologically, residues 27–47 (SYPSLLEVRDKHSFSGLPRKA) are extracellular. Residues 48 to 68 (AIIGERLSPWVSACCLIMGLW) form a helical membrane-spanning segment. Residues 69–72 (TLYN) lie on the Cytoplasmic side of the membrane.

This sequence belongs to the KISH family.

It localises to the golgi apparatus membrane. Involved in the early part of the secretory pathway. In Dictyostelium discoideum (Social amoeba), this protein is Protein kish (tmem167).